The following is a 52-amino-acid chain: ATP synthase protein 8 (52 aa).

A helical transmembrane segment spans residues 6-26 (PLLWLNLFLMFSATFVMFIVL).

It belongs to the ATPase protein 8 family. In terms of assembly, F-type ATPases have 2 components, CF(1) - the catalytic core - and CF(0) - the membrane proton channel.

It is found in the mitochondrion membrane. In terms of biological role, mitochondrial membrane ATP synthase (F(1)F(0) ATP synthase or Complex V) produces ATP from ADP in the presence of a proton gradient across the membrane which is generated by electron transport complexes of the respiratory chain. F-type ATPases consist of two structural domains, F(1) - containing the extramembraneous catalytic core and F(0) - containing the membrane proton channel, linked together by a central stalk and a peripheral stalk. During catalysis, ATP synthesis in the catalytic domain of F(1) is coupled via a rotary mechanism of the central stalk subunits to proton translocation. Part of the complex F(0) domain. Minor subunit located with subunit a in the membrane. In Penaeus monodon (Giant tiger prawn), this protein is ATP synthase protein 8 (MT-ATP8).